Consider the following 95-residue polypeptide: Co-chaperonin GroES (95 aa).

This sequence belongs to the GroES chaperonin family. As to quaternary structure, heptamer of 7 subunits arranged in a ring. Interacts with the chaperonin GroEL.

The protein localises to the cytoplasm. Together with the chaperonin GroEL, plays an essential role in assisting protein folding. The GroEL-GroES system forms a nano-cage that allows encapsulation of the non-native substrate proteins and provides a physical environment optimized to promote and accelerate protein folding. GroES binds to the apical surface of the GroEL ring, thereby capping the opening of the GroEL channel. The chain is Co-chaperonin GroES from Ruegeria sp. (strain TM1040) (Silicibacter sp.).